We begin with the raw amino-acid sequence, 201 residues long: Dermatopontin (201 aa).

The N-terminal stretch at 1-18 is a signal peptide; that stretch reads MDLSLLWVLLPLVTMAWG. At Gln19 the chain carries Pyrrolidone carboxylic acid. Sulfotyrosine is present on Tyr23. 4 repeat units span residues 26–79, 70–75, 80–135, and 125–130. The segment at 26–186 is 2 X 53-55 AA tandem repeats; sequence PYQQYHDYSD…AVERDRQWKF (161 aa). 5 disulfide bridges follow: Cys50–Cys77, Cys90–Cys132, Cys106–Cys133, Cys139–Cys196, and Cys143–Cys189. The interval 70–186 is 3 X 6 AA repeats of D-R-[EQ]-W-[NQK]-[FY]; it reads DRQWNYACMP…AVERDRQWKF (117 aa). Tyr162, Tyr164, Tyr166, and Tyr167 each carry sulfotyrosine. The stretch at 181-186 is one 3-3 repeat; it reads DRQWKF. Tyr194 carries the post-translational modification Sulfotyrosine.

Belongs to the dermatopontin family. As to quaternary structure, interacts with TGFB1, DCN and collagen. In terms of processing, sulfated on tyrosine residue(s). As to expression, expressed in fibroblasts, heart, skeletal muscle, brain and pancreas. Expressed at an intermediate level in lung and kidney, and at a low level in liver and placenta. Expressed at a lower level in fibroblasts from hypertrophic scar lesional skin and in fibroblasts from patients with systemic sclerosis than in normal skin fibroblasts.

The protein resides in the secreted. It localises to the extracellular space. The protein localises to the extracellular matrix. Its function is as follows. Seems to mediate adhesion by cell surface integrin binding. May serve as a communication link between the dermal fibroblast cell surface and its extracellular matrix environment. Enhances TGFB1 activity. Inhibits cell proliferation. Accelerates collagen fibril formation, and stabilizes collagen fibrils against low-temperature dissociation. This is Dermatopontin (DPT) from Homo sapiens (Human).